The chain runs to 507 residues: Protein O-glucosyltransferase 3 (507 aa).

The N-terminal stretch at 1 to 20 is a signal peptide; it reads MRRLPRALLLQLRLALLVAA. Residues 24-134 form a Filamin repeat; sequence EVLVSAPRSL…VAQSPYILKG (111 aa). Asn-61 and Asn-306 each carry an N-linked (GlcNAc...) asparagine glycan. The short motif at 504–507 is the Prevents secretion from ER element; that stretch reads REEL.

This sequence belongs to the KDELC family.

The protein resides in the endoplasmic reticulum lumen. The enzyme catalyses L-seryl-[EGF-like domain protein] + UDP-alpha-D-glucose = 3-O-(beta-D-glucosyl)-L-seryl-[EGF-like domain protein] + UDP + H(+). The catalysed reaction is L-seryl-[EGF-like domain protein] + UDP-alpha-D-xylose = 3-O-(beta-D-xylosyl)-L-seryl-[EGF-like domain protein] + UDP + H(+). Its pathway is protein modification; protein glycosylation. Its function is as follows. Protein glucosyltransferase that catalyzes the transfer of glucose from UDP-glucose to a serine residue within the consensus sequence peptide C-X-N-T-X-G-S-F-X-C. Can also catalyze the transfer of xylose from UDP-xylose but less efficiently. Specifically targets extracellular EGF repeats of proteins such as NOTCH1, NOTCH3, FBN1, FBN2 and LTBP1. May regulate the transport of NOTCH1 and NOTCH3 to the plasma membrane and thereby the Notch signaling pathway. The sequence is that of Protein O-glucosyltransferase 3 from Homo sapiens (Human).